We begin with the raw amino-acid sequence, 521 residues long: Cytochrome P450 1A1 (521 aa).

Phe229 serves as a coordination point for substrate. Cys463 lines the heme pocket.

The protein belongs to the cytochrome P450 family. Heme is required as a cofactor.

Its subcellular location is the endoplasmic reticulum membrane. It localises to the microsome membrane. The enzyme catalyses an organic molecule + reduced [NADPH--hemoprotein reductase] + O2 = an alcohol + oxidized [NADPH--hemoprotein reductase] + H2O + H(+). In terms of biological role, cytochromes P450 are a group of heme-thiolate monooxygenases. They oxidize a variety of structurally unrelated compounds, including steroids, fatty acids, and xenobiotics. The sequence is that of Cytochrome P450 1A1 (cyp1a1) from Limanda limanda (Common dab).